Consider the following 263-residue polypeptide: Complement C1q tumor necrosis factor-related protein 6 (263 aa).

The first 24 residues, 1 to 24 (MRVIMGTASLGSIWAVFLLPLVFG), serve as a signal peptide directing secretion. Residue N76 is glycosylated (N-linked (GlcNAc...) asparagine). Residues 80–123 (LKGDKGDRGPSGTPGKPGKNGTRGDRGSQGIKGDKGQAGSPGSS) form a disordered region. One can recognise a Collagen-like domain in the interval 82–123 (GDKGDRGPSGTPGKPGKNGTRGDRGSQGIKGDKGQAGSPGSS). The region spanning 124–263 (CQTHYSAFSV…SGHLIKAEDN (140 aa)) is the C1q domain.

It is found in the secreted. The chain is Complement C1q tumor necrosis factor-related protein 6 (C1qtnf6) from Rattus norvegicus (Rat).